A 135-amino-acid chain; its full sequence is Phosphoribosyl-AMP cyclohydrolase (135 aa).

Asp-89 contributes to the Mg(2+) binding site. Position 90 (Cys-90) interacts with Zn(2+). Mg(2+)-binding residues include Asp-91 and Asp-93. Residues Cys-106 and Cys-113 each contribute to the Zn(2+) site.

The protein belongs to the PRA-CH family. As to quaternary structure, homodimer. Mg(2+) serves as cofactor. Zn(2+) is required as a cofactor.

It localises to the cytoplasm. It carries out the reaction 1-(5-phospho-beta-D-ribosyl)-5'-AMP + H2O = 1-(5-phospho-beta-D-ribosyl)-5-[(5-phospho-beta-D-ribosylamino)methylideneamino]imidazole-4-carboxamide. The protein operates within amino-acid biosynthesis; L-histidine biosynthesis; L-histidine from 5-phospho-alpha-D-ribose 1-diphosphate: step 3/9. In terms of biological role, catalyzes the hydrolysis of the adenine ring of phosphoribosyl-AMP. This is Phosphoribosyl-AMP cyclohydrolase from Bifidobacterium adolescentis (strain ATCC 15703 / DSM 20083 / NCTC 11814 / E194a).